A 209-amino-acid polypeptide reads, in one-letter code: Thiamine-phosphate synthase (209 aa).

Residues 36–40 (QYRDK) and N68 contribute to the 4-amino-2-methyl-5-(diphosphooxymethyl)pyrimidine site. D69 and D87 together coordinate Mg(2+). T106 is a 4-amino-2-methyl-5-(diphosphooxymethyl)pyrimidine binding site. A 2-[(2R,5Z)-2-carboxy-4-methylthiazol-5(2H)-ylidene]ethyl phosphate-binding site is contributed by 133–135 (SST). A 4-amino-2-methyl-5-(diphosphooxymethyl)pyrimidine-binding site is contributed by K136. G163 serves as a coordination point for 2-[(2R,5Z)-2-carboxy-4-methylthiazol-5(2H)-ylidene]ethyl phosphate.

Belongs to the thiamine-phosphate synthase family. It depends on Mg(2+) as a cofactor.

It catalyses the reaction 2-[(2R,5Z)-2-carboxy-4-methylthiazol-5(2H)-ylidene]ethyl phosphate + 4-amino-2-methyl-5-(diphosphooxymethyl)pyrimidine + 2 H(+) = thiamine phosphate + CO2 + diphosphate. The enzyme catalyses 2-(2-carboxy-4-methylthiazol-5-yl)ethyl phosphate + 4-amino-2-methyl-5-(diphosphooxymethyl)pyrimidine + 2 H(+) = thiamine phosphate + CO2 + diphosphate. The catalysed reaction is 4-methyl-5-(2-phosphooxyethyl)-thiazole + 4-amino-2-methyl-5-(diphosphooxymethyl)pyrimidine + H(+) = thiamine phosphate + diphosphate. It participates in cofactor biosynthesis; thiamine diphosphate biosynthesis; thiamine phosphate from 4-amino-2-methyl-5-diphosphomethylpyrimidine and 4-methyl-5-(2-phosphoethyl)-thiazole: step 1/1. Functionally, condenses 4-methyl-5-(beta-hydroxyethyl)thiazole monophosphate (THZ-P) and 2-methyl-4-amino-5-hydroxymethyl pyrimidine pyrophosphate (HMP-PP) to form thiamine monophosphate (TMP). In Pseudomonas paraeruginosa (strain DSM 24068 / PA7) (Pseudomonas aeruginosa (strain PA7)), this protein is Thiamine-phosphate synthase.